Consider the following 112-residue polypeptide: Photosystem II reaction center Psb28 protein (112 aa).

It belongs to the Psb28 family. As to quaternary structure, part of the photosystem II complex.

The protein localises to the cellular thylakoid membrane. The protein is Photosystem II reaction center Psb28 protein of Synechococcus elongatus (strain ATCC 33912 / PCC 7942 / FACHB-805) (Anacystis nidulans R2).